The following is a 219-amino-acid chain: ATP phosphoribosyltransferase (219 aa).

The protein belongs to the ATP phosphoribosyltransferase family. Short subfamily. In terms of assembly, heteromultimer composed of HisG and HisZ subunits.

The protein localises to the cytoplasm. The enzyme catalyses 1-(5-phospho-beta-D-ribosyl)-ATP + diphosphate = 5-phospho-alpha-D-ribose 1-diphosphate + ATP. Its pathway is amino-acid biosynthesis; L-histidine biosynthesis; L-histidine from 5-phospho-alpha-D-ribose 1-diphosphate: step 1/9. In terms of biological role, catalyzes the condensation of ATP and 5-phosphoribose 1-diphosphate to form N'-(5'-phosphoribosyl)-ATP (PR-ATP). Has a crucial role in the pathway because the rate of histidine biosynthesis seems to be controlled primarily by regulation of HisG enzymatic activity. This chain is ATP phosphoribosyltransferase, found in Syntrophotalea carbinolica (strain DSM 2380 / NBRC 103641 / GraBd1) (Pelobacter carbinolicus).